The chain runs to 174 residues: RNA pyrophosphohydrolase (174 aa).

One can recognise a Nudix hydrolase domain in the interval 6-149; sequence GFRANVGIII…KRDVYRKVMK (144 aa). Residues 38–59 carry the Nudix box motif; the sequence is GGVDDGETAEEAMYRELYEEVG.

This sequence belongs to the Nudix hydrolase family. RppH subfamily. It depends on a divalent metal cation as a cofactor.

Its function is as follows. Accelerates the degradation of transcripts by removing pyrophosphate from the 5'-end of triphosphorylated RNA, leading to a more labile monophosphorylated state that can stimulate subsequent ribonuclease cleavage. This Shewanella baltica (strain OS223) protein is RNA pyrophosphohydrolase.